A 317-amino-acid chain; its full sequence is Transaldolase (317 aa).

Catalysis depends on Lys-132, which acts as the Schiff-base intermediate with substrate.

The protein belongs to the transaldolase family. Type 1 subfamily. As to quaternary structure, homodimer.

Its subcellular location is the cytoplasm. The catalysed reaction is D-sedoheptulose 7-phosphate + D-glyceraldehyde 3-phosphate = D-erythrose 4-phosphate + beta-D-fructose 6-phosphate. Its pathway is carbohydrate degradation; pentose phosphate pathway; D-glyceraldehyde 3-phosphate and beta-D-fructose 6-phosphate from D-ribose 5-phosphate and D-xylulose 5-phosphate (non-oxidative stage): step 2/3. Its function is as follows. Transaldolase is important for the balance of metabolites in the pentose-phosphate pathway. The sequence is that of Transaldolase from Yersinia enterocolitica serotype O:8 / biotype 1B (strain NCTC 13174 / 8081).